The chain runs to 718 residues: GMP synthase [glutamine-hydrolyzing] (718 aa).

Residues 43–247 (VIVILDAGSQ…LIDICGCSAN (205 aa)) enclose the Glutamine amidotransferase type-1 domain. Catalysis depends on for GATase activity residues cysteine 128, histidine 221, and glutamate 223. In terms of domain architecture, GMPS ATP-PPase spans 248-457 (YTLDDREQQA…LGLSDSLVWR (210 aa)). 275–281 (SGGVDST) is an ATP binding site.

In terms of assembly, homodimer.

It catalyses the reaction XMP + L-glutamine + ATP + H2O = GMP + L-glutamate + AMP + diphosphate + 2 H(+). It functions in the pathway purine metabolism; GMP biosynthesis; GMP from XMP (L-Gln route): step 1/1. The polypeptide is GMP synthase [glutamine-hydrolyzing] (guaA) (Dictyostelium discoideum (Social amoeba)).